The primary structure comprises 121 residues: Small ribosomal subunit protein bS6 (121 aa).

The tract at residues 99 to 121 is disordered; the sequence is PLPAPRVAPGTEAPAEPEAAAPA. Residues 110 to 121 are compositionally biased toward low complexity; it reads EAPAEPEAAAPA.

This sequence belongs to the bacterial ribosomal protein bS6 family.

Functionally, binds together with bS18 to 16S ribosomal RNA. The sequence is that of Small ribosomal subunit protein bS6 from Synechococcus sp. (strain CC9311).